Consider the following 537-residue polypeptide: GTPase LSG1-1 (537 aa).

Residues 158–362 enclose the CP-type G domain; that stretch reads WRQLWRVLER…LCDCPGLVFP (205 aa). Positions 176 to 180 match the DARXP motif motif; it reads DARDP. The G4 stretch occupies residues 206 to 209; that stretch reads NKAD. 206–209 is a binding site for GTP; the sequence is NKAD. The G5 stretch occupies residues 234 to 236; sequence SAK. The interval 311 to 318 is G1; it reads GYPNVGKS. 314 to 319 is a GTP binding site; that stretch reads NVGKSS. The tract at residues 337 to 341 is G2; that stretch reads GKTKH. Residues 355–358 form a G3 region; the sequence is DCPG. G358 provides a ligand contact to GTP. Residues 484 to 508 form a disordered region; that stretch reads LGAETREGSQTEKKGEEAPSLGLDQ. Residues 487–500 show a composition bias toward basic and acidic residues; sequence ETREGSQTEKKGEE.

It belongs to the TRAFAC class YlqF/YawG GTPase family. In terms of tissue distribution, ubiquitous, with the highest expression in stem and hypsophyll on day 66.

It is found in the cytoplasm. Its function is as follows. GTPase that might be redundant with LSG1-2 for ribosome biogenesis. Binds to 23S rRNA. The polypeptide is GTPase LSG1-1 (Arabidopsis thaliana (Mouse-ear cress)).